We begin with the raw amino-acid sequence, 441 residues long: Methionine aminopeptidase 2A (441 aa).

The disordered stretch occupies residues 1-103; sequence MAIGNPEVAT…SGDFPQGEIQ (103 aa). Residues 18 to 33 show a composition bias toward polar residues; it reads AESSNGNESQLSSDLT. The segment covering 37–62 has biased composition (basic and acidic residues); it reads DLAEVKEDEKDNNQEEEDGLKAEAST. Over residues 63–76 the composition is skewed to basic residues; sequence KKKKKKSKSKKKKS. His-194 is a substrate binding site. 3 residues coordinate a divalent metal cation: Asp-214, Asp-225, and His-294. His-302 is a substrate binding site. 2 residues coordinate a divalent metal cation: Glu-327 and Glu-422.

It belongs to the peptidase M24A family. Methionine aminopeptidase eukaryotic type 2 subfamily. It depends on Co(2+) as a cofactor. Requires Zn(2+) as cofactor. Mn(2+) serves as cofactor. Fe(2+) is required as a cofactor. As to expression, ubiquitous. Preferentially expressed in roots.

It is found in the cytoplasm. The enzyme catalyses Release of N-terminal amino acids, preferentially methionine, from peptides and arylamides.. In terms of biological role, cotranslationally removes the N-terminal methionine from nascent proteins. The N-terminal methionine is often cleaved when the second residue in the primary sequence is small and uncharged (Met-Ala-, Cys, Gly, Pro, Ser, Thr, or Val). The protein is Methionine aminopeptidase 2A of Arabidopsis thaliana (Mouse-ear cress).